The following is a 431-amino-acid chain: MSTIETTQGLERRVSITIPADEVETAVREQLKGFAKNARVDGFRKGKVPHHIIAQRFGSSARSEALNDLLPRHFFDLAFKEKLNLAGRPTFAVENAESGKDVVFTATFEVYPEVELKGLENIKVEKPVVEITEADVDNMIEVLRKQQATWAESQAAANAEDRVTIDFSGTIDGEEFEGGKASDFVLFMGQGRMIPGFEEGVIGHKAGEQFDIDVTFPADYHAENLKGKAAKFAITLKKVEVMVLPELTEEFVAKFGPNTKTVADLRNEIQKNMRRELKNALTSRVKQQVIDGLLAENAIDVPFAAVDQEIEVLRGQAAQRFGGNTQQAAQLPRELFEEQAKRRVQVGLLFGEIISSNELKADEERVKAMIEDIASAYEQPAEVIEYYNKNNELMNNLRNVVLEEQAVDAVLAKAQVTEKTASFDEIMNPQA.

A PPIase FKBP-type domain is found at Glu160–Pro245.

It belongs to the FKBP-type PPIase family. Tig subfamily.

The protein resides in the cytoplasm. The catalysed reaction is [protein]-peptidylproline (omega=180) = [protein]-peptidylproline (omega=0). In terms of biological role, involved in protein export. Acts as a chaperone by maintaining the newly synthesized protein in an open conformation. Functions as a peptidyl-prolyl cis-trans isomerase. The sequence is that of Trigger factor from Actinobacillus succinogenes (strain ATCC 55618 / DSM 22257 / CCUG 43843 / 130Z).